A 273-amino-acid chain; its full sequence is Homeobox protein Hox-C13b (273 aa).

The homeobox DNA-binding region spans 201-260 (GRKKRVPYTKIQLKELEKEYAASKFITKDRRRRISATTSLSERQVTIWFQNRRVKEKKFV).

It belongs to the Abd-B homeobox family.

The protein resides in the nucleus. Functionally, sequence-specific transcription factor which is part of a developmental regulatory system that provides cells with specific positional identities on the anterior-posterior axis. Plays a role in early embryonic development. This Danio rerio (Zebrafish) protein is Homeobox protein Hox-C13b (hoxc13b).